The sequence spans 285 residues: Homeobox protein vex1 (285 aa).

Disordered stretches follow at residues 30–54 (KSGNPDKESNISLPSRATGPTLPSV) and 69–88 (NEERSPPVKDQLHSQPAPQE). A compositionally biased stretch (basic and acidic residues) spans 69–80 (NEERSPPVKDQL). The homeobox DNA-binding region spans 131–190 (AARARTKFSPEQLEELERSFKENRYIGSSEKRRLSKVLKLSETQIKTWFQNRRMKFKRQT).

As to expression, widely expressed in the embryo prior to gastrulation. Becomes restricted to the ventral marginal zone by mid/late gastrulation. Ventral localization persists during gastrulation and neurulation in the ventral region of the closed blastopore and in the proctodeum during tail bud stages.

The protein localises to the nucleus. Transcriptional repressor. Acts in a ventral signaling pathway downstream of bmp4 to antagonize the Spemann organizer and ventrally pattern the embryonic mesoderm. Represses transcription of the dorsal genes gsc and otx2. This chain is Homeobox protein vex1, found in Xenopus laevis (African clawed frog).